The sequence spans 155 residues: MKIELDSFSGNKIYPGRGTLFVRGDSKIFRFYSSKTASLFKQRKNPRRIAWTVLYRRKHKKGITEEVSKKRSRKSVKAVRGIVGASLDVIKEKRNARPETRNATRAKHAEAAKERKEKEAERRKAAKAAHVAAGGPKVSKLGAKGSAPKVQATSR.

Positions 93-123 (KRNARPETRNATRAKHAEAAKERKEKEAERR) are enriched in basic and acidic residues. The disordered stretch occupies residues 93–155 (KRNARPETRN…SAPKVQATSR (63 aa)).

Belongs to the eukaryotic ribosomal protein eL24 family.

In Yarrowia lipolytica (strain CLIB 122 / E 150) (Yeast), this protein is Large ribosomal subunit protein eL24 (RPL24).